Reading from the N-terminus, the 512-residue chain is Maturase K (512 aa).

This sequence belongs to the intron maturase 2 family. MatK subfamily.

The protein resides in the plastid. Its subcellular location is the chloroplast. In terms of biological role, usually encoded in the trnK tRNA gene intron. Probably assists in splicing its own and other chloroplast group II introns. The sequence is that of Maturase K from Zantedeschia aethiopica (White calla lily).